Here is a 2021-residue protein sequence, read N- to C-terminus: HEAT repeat-containing protein 5A (2021 aa).

2 HEAT repeats span residues 795 to 836 and 1059 to 1096; these read SQRP…HLAS and VNLS…REAA. Disordered regions lie at residues 1503–1528 and 1989–2012; these read EGNG…LPAD and RGNQ…HGSP. A compositionally biased stretch (polar residues) spans 1512–1522; it reads VTPTSMGQERG.

The protein belongs to the HEATR5 family.

The protein is HEAT repeat-containing protein 5A (heatr5a) of Xenopus tropicalis (Western clawed frog).